The chain runs to 160 residues: MPSFDVVSEVDKHELTNAVDQANRELSTRFDFKGSDAKFELEGYVVTQVASSAFQLKQMLDILRGRLGARGIDVRCLDEESPLENLGGARQKITIKQGIEQAVSKKLIAAIKASKLKVESQINGEKLRITGKKRDDLQAVMQLLRKTEVDLPLQFDNFRD.

It belongs to the YajQ family.

Nucleotide-binding protein. The sequence is that of Nucleotide-binding protein BAV0791 from Bordetella avium (strain 197N).